The sequence spans 419 residues: Probable serine/threonine-protein kinase CST (419 aa).

A lipid anchor (N-myristoyl glycine) is attached at glycine 2. Cysteine 4 carries S-palmitoyl cysteine lipidation. The tract at residues 8 to 48 (FSSSSPSKTGLHSHATTNNHSNGTEFSSTTGATTNSSVGQQ) is disordered. Polar residues predominate over residues 15-48 (KTGLHSHATTNNHSNGTEFSSTTGATTNSSVGQQ). Residues 86–368 (FKPDSMLGQG…KEVVEVLEHI (283 aa)) enclose the Protein kinase domain. Position 92-100 (92-100 (LGQGGFGKV)) interacts with ATP. At serine 117 the chain carries Phosphoserine. Residue lysine 124 participates in ATP binding. The residue at position 169 (tyrosine 169) is a Phosphotyrosine. Aspartate 218 functions as the Proton acceptor in the catalytic mechanism. At serine 222 the chain carries Phosphoserine. A phosphothreonine mark is found at threonine 253 and threonine 258. Position 266 is a phosphotyrosine (tyrosine 266). The span at 378–390 (SSTKQAVANSSRS) shows a compositional bias: polar residues. A disordered region spans residues 378–419 (SSTKQAVANSSRSSPHHYRYKAGALGAERKRATPGRFGSVEK).

This sequence belongs to the protein kinase superfamily. Ser/Thr protein kinase family. As to quaternary structure, interacts with SOBIR1/EVR and RLK5/HAE. Autophosphorylated on serine, threonine and tyrosine residues.

The protein localises to the cell membrane. It localises to the nucleus. It carries out the reaction L-seryl-[protein] + ATP = O-phospho-L-seryl-[protein] + ADP + H(+). It catalyses the reaction L-threonyl-[protein] + ATP = O-phospho-L-threonyl-[protein] + ADP + H(+). Acts as a spatial inhibitor of signaling that modulates abscission zone cell adhesion and expansion. Acts both directly and indirectly by physically interacting with RLK5/HAE and SOBIR1/EVR at the cell surface. This chain is Probable serine/threonine-protein kinase CST, found in Arabidopsis thaliana (Mouse-ear cress).